The sequence spans 317 residues: Large ribosomal subunit protein uL10 (317 aa).

A disordered region spans residues 286-317 (AGAGAAAEKKEEAKKEESESEEDDDMGFGLFD). Basic and acidic residues predominate over residues 292–302 (AEKKEEAKKEE).

This sequence belongs to the universal ribosomal protein uL10 family. In terms of assembly, P0 forms a pentameric complex by interaction with dimers of P1 and P2. Phosphorylated.

Functionally, ribosomal protein P0 is the functional equivalent of E.coli protein L10. This chain is Large ribosomal subunit protein uL10 (RpLP0), found in Ceratitis capitata (Mediterranean fruit fly).